A 435-amino-acid chain; its full sequence is ATP-dependent protease ATPase subunit HslU (435 aa).

ATP is bound by residues Ile-18, 60-65 (GVGKTE), Asp-248, Glu-313, and Arg-385.

This sequence belongs to the ClpX chaperone family. HslU subfamily. As to quaternary structure, a double ring-shaped homohexamer of HslV is capped on each side by a ring-shaped HslU homohexamer. The assembly of the HslU/HslV complex is dependent on binding of ATP.

The protein localises to the cytoplasm. ATPase subunit of a proteasome-like degradation complex; this subunit has chaperone activity. The binding of ATP and its subsequent hydrolysis by HslU are essential for unfolding of protein substrates subsequently hydrolyzed by HslV. HslU recognizes the N-terminal part of its protein substrates and unfolds these before they are guided to HslV for hydrolysis. The polypeptide is ATP-dependent protease ATPase subunit HslU (Sinorhizobium medicae (strain WSM419) (Ensifer medicae)).